The primary structure comprises 154 residues: MHCPFCRHPDSRVVDSRETDEGQAIRRRRSCPECGRRFTTVETAVLAVVKRSGVTEPFSREKVIRGVRRSCQGRQVDDDALNLLAQQVEDAVRATGSAEVPSHEVGLAILGPLRELDEVAYLRFASVYRSFSSAEDFEREIQALRAHREVPAQS.

A zinc finger lies at 3-34; sequence CPFCRHPDSRVVDSRETDEGQAIRRRRSCPEC. Residues 46-136 enclose the ATP-cone domain; sequence LAVVKRSGVT…VYRSFSSAED (91 aa).

The protein belongs to the NrdR family. Zn(2+) is required as a cofactor.

Its function is as follows. Negatively regulates transcription of bacterial ribonucleotide reductase nrd genes and operons by binding to NrdR-boxes. The sequence is that of Transcriptional repressor NrdR from Mycolicibacterium vanbaalenii (strain DSM 7251 / JCM 13017 / BCRC 16820 / KCTC 9966 / NRRL B-24157 / PYR-1) (Mycobacterium vanbaalenii).